The primary structure comprises 255 residues: MLNTLMLREWLRSMLRSCISKIFGDLMLISHISLSDKITLLTYGCNFKCKYCFFKPLSCKKYSVDEILNKILEVNENYKLDKILIAGGEPTLQNDLSELTKLLKDEGFYLMLSTNGYYLKDMLDKLEVDEIHIDLKAYDENKHIYLTSCSNKKVLDCISYIGKYRDEFNFKVEIDTVLIPNIVDLDEIEKIAKFLSNWDLPYRITGYVKYNNNLNAEKPDEDKILKAKEIALKYLSNVSCSLDFKRHKKSKKVII.

A Radical SAM core domain is found at 30 to 245; it reads SHISLSDKIT…SNVSCSLDFK (216 aa). [4Fe-4S] cluster-binding residues include C45, C49, and C52. S-adenosyl-L-methionine-binding positions include 51–53, G88, and 134–136; these read YCF and DLK.

Belongs to the organic radical-activating enzymes family. It depends on [4Fe-4S] cluster as a cofactor.

It catalyses the reaction glycyl-[protein] + reduced [flavodoxin] + S-adenosyl-L-methionine = glycin-2-yl radical-[protein] + semiquinone [flavodoxin] + 5'-deoxyadenosine + L-methionine + H(+). The sequence is that of Putative glycyl-radical enzyme activating enzyme MJ1632 from Methanocaldococcus jannaschii (strain ATCC 43067 / DSM 2661 / JAL-1 / JCM 10045 / NBRC 100440) (Methanococcus jannaschii).